Reading from the N-terminus, the 183-residue chain is Oligoribonuclease (183 aa).

Residues Leu-9–Leu-172 enclose the Exonuclease domain. The active site involves Tyr-130.

The protein belongs to the oligoribonuclease family.

The protein localises to the cytoplasm. In terms of biological role, 3'-to-5' exoribonuclease specific for small oligoribonucleotides. This Acinetobacter baylyi (strain ATCC 33305 / BD413 / ADP1) protein is Oligoribonuclease.